The chain runs to 245 residues: Adapter protein MecA (245 aa).

This sequence belongs to the MecA family. In terms of assembly, homodimer.

Functionally, enables the recognition and targeting of unfolded and aggregated proteins to the ClpC protease or to other proteins involved in proteolysis. This is Adapter protein MecA from Streptococcus pneumoniae (strain ATCC BAA-255 / R6).